Here is a 288-residue protein sequence, read N- to C-terminus: Serine/threonine-protein acetyltransferase YopJ (288 aa).

Catalysis depends on residues histidine 109 and glutamate 128. Residue histidine 109 coordinates CoA. Residue 167 to 168 (RS) coordinates CoA. The active site involves cysteine 172. 1D-myo-inositol hexakisphosphate-binding positions include 182–185 (KLYI) and 224–225 (KH). 227-230 (QGKK) provides a ligand contact to CoA. A 1D-myo-inositol hexakisphosphate-binding site is contributed by arginine 257. A CoA-binding site is contributed by 266–270 (DGKEL).

It belongs to the acetyltransferase YopJ family. Requires 1D-myo-inositol hexakisphosphate as cofactor.

It is found in the secreted. The enzyme catalyses L-threonyl-[protein] + acetyl-CoA = O-acetyl-L-threonyl-[protein] + CoA. The catalysed reaction is L-seryl-[protein] + acetyl-CoA = O-acetyl-L-seryl-[protein] + CoA. Its activity is regulated as follows. 1D-myo-inositol hexakisphosphate activates protein-acetyltransferase activity via an allosteric mechanism: 1D-myo-inositol hexakisphosphate-binding induces a conformational rearrangement that stimulates the interaction with acetyl-CoA. In terms of biological role, serine/threonine-protein acetyltransferase translocated into infected cells, which inhibits the host immune response and induces cell death by mediating acetylation of target proteins. Inhibits the MAPK and NF-kappa-B signaling pathways by acetylating protein-kinases such as MAP2K1, MAP2K6, MAP3K7/TAK1 and I-kappa-B kinase (CHUK/IKKA and IKBKB) on serine and threonine residues critical for their activation by phosphorylation, thereby preventing protein-kinase activation. Promotes pyroptosis, a programmed cell death, in host cells by mediating acetylation of MAP3K7/TAK1: MAP3K7/TAK1 inactivation triggers activation of caspase-8 (CASP8), followed by CASP8-dependent cleavage of gasdermin-D (GSDMD) and induction of pyroptosis. This chain is Serine/threonine-protein acetyltransferase YopJ, found in Yersinia pestis.